Reading from the N-terminus, the 418-residue chain is Putative F-box protein At3g23950 (418 aa).

Residues 1-42 (MNIPPELTFEVLVRLPLKSLARFRSMCKEWKLVIDSEFFRDC) enclose the F-box domain.

The polypeptide is Putative F-box protein At3g23950 (Arabidopsis thaliana (Mouse-ear cress)).